The following is a 416-amino-acid chain: Neurotensin receptor type 2 (416 aa).

At 1 to 32 (METSSLWPPRPSPSAGLSLEARLGVDTRLWAK) the chain is on the extracellular side. A helical membrane pass occupies residues 33-55 (VLFTALYSLIFALGTAGNALSVH). The Cytoplasmic portion of the chain corresponds to 56 to 64 (VVLKARAGR). The chain crosses the membrane as a helical span at residues 65-87 (PGRLRYHVLSLALSALLLLLISV). The Extracellular segment spans residues 88 to 109 (PMELYNFVWSHYPWVFGDLGCR). An intrachain disulfide couples Cys-108 to Cys-194. A helical transmembrane segment spans residues 110-131 (GYYFVRELCAYATVLSVASLSA). Over 132–154 (ERCLAVCQPLRARRLLTPRRTRR) the chain is Cytoplasmic. The helical transmembrane segment at 155–176 (LLSLVWVASLGLALPMAVIMGQ) threads the bilayer. Topologically, residues 177–217 (KHEMERADGEPEPASRVCTVLVSRATLQVFIQVNVLVSFVL) are extracellular. A helical membrane pass occupies residues 218–237 (PLALTAFLNGITVNHLVALY). The Cytoplasmic segment spans residues 238–297 (SQVPSASAQVNSIPSRLELLSEEGLLGFITWRKTLSLGVQASLVRHKDASQIRSLQHSAQ). The helical transmembrane segment at 298-318 (VLRAIVAVYVICWLPYHARRL) threads the bilayer. At 319–337 (MYCYIPDDGWTDELYDFYH) the chain is on the extracellular side. Residues 338-358 (YFYMVTNTLFYVSSAVTPVLY) form a helical membrane-spanning segment. At 359-416 (NAVSSSFRKLFLESLSSLCGEQRSVVPLPQEAPESTTSTYSFRLWGSPRNPSLGEIQV) the chain is on the cytoplasmic side. Cys-377 is lipidated: S-palmitoyl cysteine. Ser-410 is subject to Phosphoserine.

It belongs to the G-protein coupled receptor 1 family. Neurotensin receptor subfamily. NTSR2 sub-subfamily. In terms of tissue distribution, expressed maximally in the cerebellum, hippocampus, piriform cortex and neocortex of adult brain.

Its subcellular location is the cell membrane. Receptor for the tridecapeptide neurotensin. It is associated with G proteins that activate a phosphatidylinositol-calcium second messenger system. The sequence is that of Neurotensin receptor type 2 (Ntsr2) from Mus musculus (Mouse).